A 206-amino-acid polypeptide reads, in one-letter code: Large ribosomal subunit protein eL13z (206 aa).

The tract at residues 183–206 (ERTNKRHAGARAKRAADAEKEEKK) is disordered. Residues 186–195 (NKRHAGARAK) are compositionally biased toward basic residues. Basic and acidic residues predominate over residues 196-206 (RAADAEKEEKK).

This sequence belongs to the eukaryotic ribosomal protein eL13 family.

In Brassica napus (Rape), this protein is Large ribosomal subunit protein eL13z.